We begin with the raw amino-acid sequence, 87 residues long: MDSYSSPPMGGSGSSVSPEVMMESVKTQLAQAYAEELIETLRTKCFDKCVTKPGSSLGGSESSCISRCVERYMEATAIISRSLFTQR.

Residues 1–20 (MDSYSSPPMGGSGSSVSPEV) form a disordered region. The short motif at 45-68 (CFDKCVTKPGSSLGGSESSCISRC) is the Twin CX3C motif element. Intrachain disulfides connect Cys-45–Cys-68 and Cys-49–Cys-64.

The protein belongs to the small Tim family. In terms of assembly, heterohexamer; composed of 3 copies of TIM8 and 3 copies of TIM13, named soluble 70 kDa complex. Associates with the TIM22 complex, whose core is composed of TIM22. Expressed in roots, flowers, young cotyledons and leaves.

The protein localises to the mitochondrion intermembrane space. Its function is as follows. Mitochondrial intermembrane chaperone that participates in the import and insertion of some multi-pass transmembrane proteins into the mitochondrial inner membrane. Also required for the transfer of beta-barrel precursors from the TOM complex to the sorting and assembly machinery (SAM complex) of the outer membrane. Acts as a chaperone-like protein that protects the hydrophobic precursors from aggregation and guide them through the mitochondrial intermembrane space. The TIM8-TIM13 complex mediates the import of some proteins while the predominant TIM9-TIM10 70 kDa complex mediates the import of much more proteins. The chain is Mitochondrial import inner membrane translocase subunit TIM13 (TIM13) from Arabidopsis thaliana (Mouse-ear cress).